The chain runs to 354 residues: Green-sensitive opsin-3 (354 aa).

The Extracellular portion of the chain corresponds to 1–39; that stretch reads MSGLNGFEGDNFYIPMSNRTGLVRDPFVYEQYYLAEPWQ. Asparagine 18 carries N-linked (GlcNAc...) asparagine glycosylation. A helical membrane pass occupies residues 40–64; the sequence is FKLLACYMFFLICLGLPINGFTLFV. Topologically, residues 65 to 76 are cytoplasmic; that stretch reads TAQHKKLQQPLN. Residues 77–102 form a helical membrane-spanning segment; that stretch reads FILVNLAVAGMIMVCFGFTITISSAV. Residues 103–116 lie on the Extracellular side of the membrane; it reads NGYFYFGPTACAIE. A disulfide bridge connects residues cysteine 113 and cysteine 190. The chain crosses the membrane as a helical span at residues 117-136; the sequence is GFMATLGGEVALWSLVVLAI. Residues 137–155 are Cytoplasmic-facing; that stretch reads ERYIVVCKPMGSFKFSASH. The helical transmembrane segment at 156–179 threads the bilayer; that stretch reads ALGGIGFTWFMAMTCAAPPLVGWS. Residues 180 to 205 are Extracellular-facing; it reads RYIPEGLQCSCGPDYYTLNPKYNNES. Residue asparagine 203 is glycosylated (N-linked (GlcNAc...) asparagine). The helical transmembrane segment at 206 to 233 threads the bilayer; it reads YVIYMFVVHFIVPVTVIFFTYGRLVCTV. Over 234-255 the chain is Cytoplasmic; that stretch reads KSAAAAQQDSASTQKAEKEVTR. Residues 256–279 form a helical membrane-spanning segment; the sequence is MVILMVVGFLVAWTPYATVAAWIF. Topologically, residues 280 to 287 are extracellular; the sequence is FNKGAAFT. A helical membrane pass occupies residues 288–312; the sequence is AQFMAVPAFFSKSSALFNPIIYVLL. Lysine 299 is modified (N6-(retinylidene)lysine). Over 313-354 the chain is Cytoplasmic; it reads NKQFRNCMLTTLFCGKNPLGDEESSTVSTKTEVSTVSSVSPA.

This sequence belongs to the G-protein coupled receptor 1 family. Opsin subfamily. The color pigments are found in the cone photoreceptor cells.

It localises to the membrane. Visual pigments are the light-absorbing molecules that mediate vision. They consist of an apoprotein, opsin, covalently linked to cis-retinal. In Psalidodon fasciatus (Banded astyanax), this protein is Green-sensitive opsin-3 (RH11).